A 168-amino-acid polypeptide reads, in one-letter code: NADH-quinone oxidoreductase subunit B (168 aa).

[4Fe-4S] cluster-binding residues include Cys49, Cys50, Cys114, and Cys144.

This sequence belongs to the complex I 20 kDa subunit family. As to quaternary structure, NDH-1 is composed of 14 different subunits. Subunits NuoB, C, D, E, F, and G constitute the peripheral sector of the complex. The cofactor is [4Fe-4S] cluster.

The protein localises to the cell membrane. The enzyme catalyses a quinone + NADH + 5 H(+)(in) = a quinol + NAD(+) + 4 H(+)(out). Functionally, NDH-1 shuttles electrons from NADH, via FMN and iron-sulfur (Fe-S) centers, to quinones in the respiratory chain. Couples the redox reaction to proton translocation (for every two electrons transferred, four hydrogen ions are translocated across the cytoplasmic membrane), and thus conserves the redox energy in a proton gradient. The chain is NADH-quinone oxidoreductase subunit B from Wolbachia sp. subsp. Brugia malayi (strain TRS).